Reading from the N-terminus, the 96-residue chain is MCHTSCSPACQPTCCIHSPCQASCYVPVSCQSSVCMPVSCTRIVCVAPSCQPSVCVPVSCRPIIYVTPSCQSSGCCQPPCTTALCRPISCSTPSCC.

14 repeat units span residues 10–14 (CQPTC), 15–19 (CIHSP), 24–28 (CYVPV), 30–34 (CQSSV), 35–39 (CMPVS), 45–49 (CVAPS), 50–54 (CQPSV), 55–59 (CVPVS), 60–64 (CRPII), 70–74 (CQSSG), 75–79 (CCQPP), 80–84 (CTTAL), 85–89 (CRPIS), and 90–94 (CSTPS). The interval 10-94 (CQPTCCIHSP…CRPISCSTPS (85 aa)) is 14 X 5 AA approximate repeats.

It belongs to the KRTAP type 12 family. As to quaternary structure, interacts with hair keratins. In terms of tissue distribution, restricted to a narrow region of the hair fiber cuticle, lying approximately 20 cell layers above the apex of the dermal papilla of the hair root; not detected in any other tissues.

In the hair cortex, hair keratin intermediate filaments are embedded in an interfilamentous matrix, consisting of hair keratin-associated proteins (KRTAP), which are essential for the formation of a rigid and resistant hair shaft through their extensive disulfide bond cross-linking with abundant cysteine residues of hair keratins. The matrix proteins include the high-sulfur and high-glycine-tyrosine keratins. The sequence is that of Keratin-associated protein 12-3 (KRTAP12-3) from Homo sapiens (Human).